The primary structure comprises 42 residues: Pelovaterin (42 aa).

Disulfide bonds link cysteine 8–cysteine 38, cysteine 16–cysteine 32, and cysteine 24–cysteine 39.

It is found in the secreted. The protein localises to the extracellular space. Its subcellular location is the extracellular matrix. Functionally, induces the nucleation and stabilization of vaterite, one of the crystalline polymorphs of calcium carbonate. Exhibits strong antimicrobial activity against Pseudomonas aeruginosa and Proteus vulgaris. In Pelodiscus sinensis (Chinese softshell turtle), this protein is Pelovaterin.